Here is a 192-residue protein sequence, read N- to C-terminus: Putative ripening-related protein 2 (192 aa).

The first 26 residues, 1-26 (MATTNCLLALAIAGLVLVSLPGLSRG), serve as a signal peptide directing secretion.

It belongs to the kiwellin family.

It is found in the secreted. The polypeptide is Putative ripening-related protein 2 (Oryza sativa subsp. japonica (Rice)).